The sequence spans 206 residues: Triafestin-1 (206 aa).

A signal peptide spans 1 to 18 (MKTILAVIFFGILAFAFA). N-linked (GlcNAc...) asparagine glycosylation occurs at Asn-55.

The protein belongs to the calycin superfamily. Triabin family. As to quaternary structure, interacts with host coagulation factor XII (F12) (inactive and activated) (via amino acids 1-77). Interacts with host high molecular weight kininogen (KNG1) (via amino acids 402-532). As to expression, salivary gland (at protein level).

The protein localises to the secreted. With respect to regulation, zn(2+) modulates binding to host coagulation factor XII (F12) and high molecular weight kininogen (KNG1). Functionally, suppresses activation of the host plasma kallikrein-kinin system, leading to inhibition of the intrinsic coagulation pathway. Blocks host coagulation factor XII (F12) and prekallikrein (KLKB1) reciprocal activation without affecting their amidolytic activities. Blocks binding of host F12 and high molecular weight kininogen (KNG1) to negatively charged surfaces. Attenuates generation of bradykinin by interfering with activation of host kallikrein-kinin system. In Triatoma infestans (Assassin bug), this protein is Triafestin-1.